Consider the following 556-residue polypeptide: 2-succinyl-5-enolpyruvyl-6-hydroxy-3-cyclohexene-1-carboxylate synthase (556 aa).

Belongs to the TPP enzyme family. MenD subfamily. As to quaternary structure, homodimer. It depends on Mg(2+) as a cofactor. Mn(2+) is required as a cofactor. Requires thiamine diphosphate as cofactor.

The enzyme catalyses isochorismate + 2-oxoglutarate + H(+) = 5-enolpyruvoyl-6-hydroxy-2-succinyl-cyclohex-3-ene-1-carboxylate + CO2. It functions in the pathway quinol/quinone metabolism; 1,4-dihydroxy-2-naphthoate biosynthesis; 1,4-dihydroxy-2-naphthoate from chorismate: step 2/7. It participates in quinol/quinone metabolism; menaquinone biosynthesis. Its function is as follows. Catalyzes the thiamine diphosphate-dependent decarboxylation of 2-oxoglutarate and the subsequent addition of the resulting succinic semialdehyde-thiamine pyrophosphate anion to isochorismate to yield 2-succinyl-5-enolpyruvyl-6-hydroxy-3-cyclohexene-1-carboxylate (SEPHCHC). The sequence is that of 2-succinyl-5-enolpyruvyl-6-hydroxy-3-cyclohexene-1-carboxylate synthase from Enterobacter sp. (strain 638).